The following is a 445-amino-acid chain: Exodeoxyribonuclease 7 large subunit (445 aa).

The protein belongs to the XseA family. In terms of assembly, heterooligomer composed of large and small subunits.

The protein localises to the cytoplasm. The enzyme catalyses Exonucleolytic cleavage in either 5'- to 3'- or 3'- to 5'-direction to yield nucleoside 5'-phosphates.. Bidirectionally degrades single-stranded DNA into large acid-insoluble oligonucleotides, which are then degraded further into small acid-soluble oligonucleotides. In Shewanella pealeana (strain ATCC 700345 / ANG-SQ1), this protein is Exodeoxyribonuclease 7 large subunit.